The sequence spans 237 residues: Probable septum site-determining protein MinC (237 aa).

It belongs to the MinC family. As to quaternary structure, interacts with MinD and FtsZ.

In terms of biological role, cell division inhibitor that blocks the formation of polar Z ring septums. Rapidly oscillates between the poles of the cell to destabilize FtsZ filaments that have formed before they mature into polar Z rings. Prevents FtsZ polymerization. The chain is Probable septum site-determining protein MinC from Buchnera aphidicola subsp. Acyrthosiphon pisum (strain 5A).